The primary structure comprises 199 residues: Recombination protein RecR (199 aa).

The C4-type zinc finger occupies 57–72 (CQSCRTYTEESLCPIC). Positions 81-176 (STICVVETPA…VISRIAHGVP (96 aa)) constitute a Toprim domain.

This sequence belongs to the RecR family.

In terms of biological role, may play a role in DNA repair. It seems to be involved in an RecBC-independent recombinational process of DNA repair. It may act with RecF and RecO. In Shewanella sp. (strain MR-4), this protein is Recombination protein RecR.